A 90-amino-acid chain; its full sequence is Probable Fe(2+)-trafficking protein (90 aa).

This sequence belongs to the Fe(2+)-trafficking protein family. As to quaternary structure, monomer.

Its function is as follows. Could be a mediator in iron transactions between iron acquisition and iron-requiring processes, such as synthesis and/or repair of Fe-S clusters in biosynthetic enzymes. The chain is Probable Fe(2+)-trafficking protein from Yersinia pseudotuberculosis serotype O:1b (strain IP 31758).